Consider the following 182-residue polypeptide: Small ribosomal subunit protein uS9 (182 aa).

It belongs to the universal ribosomal protein uS9 family.

The chain is Small ribosomal subunit protein uS9 from Corynebacterium glutamicum (strain R).